A 437-amino-acid polypeptide reads, in one-letter code: Purple acid phosphatase 18 (437 aa).

The signal sequence occupies residues 1–23 (MEKWGILLLVTLSVSIIFTSAAA). Residues D148, D175, and Y178 each coordinate Fe cation. Residue D175 coordinates Zn(2+). 2 residues coordinate Zn(2+): N208 and H291. N208 provides a ligand contact to substrate. Catalysis depends on H301, which acts as the Proton donor. H328 serves as a coordination point for Zn(2+). Substrate is bound at residue 328–330 (HVH). Fe cation is bound at residue H330. Residue N390 is glycosylated (N-linked (GlcNAc...) asparagine).

Belongs to the metallophosphoesterase superfamily. Purple acid phosphatase family. Homodimer. It depends on Fe cation as a cofactor. Requires Zn(2+) as cofactor. As to expression, expressed in roots, stems, leaves, flowers and siliques.

The protein localises to the secreted. It catalyses the reaction a phosphate monoester + H2O = an alcohol + phosphate. In Arabidopsis thaliana (Mouse-ear cress), this protein is Purple acid phosphatase 18 (PAP18).